The sequence spans 138 residues: Large ribosomal subunit protein uL16c (138 aa).

This sequence belongs to the universal ribosomal protein uL16 family. In terms of assembly, part of the 50S ribosomal subunit.

It is found in the plastid. The protein localises to the chloroplast. This chain is Large ribosomal subunit protein uL16c, found in Chaetosphaeridium globosum (Charophycean green alga).